The sequence spans 510 residues: Leucine-rich repeat-containing protein 14B (510 aa).

The LRR 1; degenerate repeat unit spans residues 100 to 137 (SNRLRVADFTGIQDVQVQQCPCGRALGRWGRTKVLART). An LRR 2; degenerate repeat occupies 181 to 205 (QVCCPSLRADSLSPGQLLQVLGLAG). The LRR 4; degenerate repeat unit spans residues 234–273 (FPQLTSLTLPTKAFDAPPTCAPDPEGEDLLLTSIAWELSQ). 5 LRR repeats span residues 274 to 298 (MNQL…LSPL), 299 to 330 (KTPL…AHLE), 331 to 349 (VLDL…TFFR), 355 to 382 (AQTL…GLSP), and 383 to 407 (CSQL…LFAA).

The protein belongs to the PRAME family. LRRC14 subfamily.

This is Leucine-rich repeat-containing protein 14B from Mus musculus (Mouse).